The following is a 143-amino-acid chain: Cofilin (143 aa).

Positions 5 to 137 (GVAVADESLN…AYESVLEKVS (133 aa)) constitute an ADF-H domain.

It belongs to the actin-binding proteins ADF family.

Its subcellular location is the cytoplasm. The protein resides in the cytoskeleton. It localises to the nucleus matrix. Controls reversibly actin polymerization and depolymerization in a pH-sensitive manner. It has the ability to bind G- and F-actin in a 1:1 ratio of cofilin to actin. Binding to F-actin is regulated by tropomyosin. It is the major component of intranuclear and cytoplasmic actin rods. Required for accumulation of actin at the cell division site via depolymerizing actin at the cell ends. In association with myosin II has a role in the assembly of the contractile ring via severing actin filaments. Involved in the maintenance of the contractile ring once formed. In association with profilin and capping protein, has a role in the mitotic reorganization of the actin cytoskeleton. The chain is Cofilin (COF1) from Kluyveromyces lactis (strain ATCC 8585 / CBS 2359 / DSM 70799 / NBRC 1267 / NRRL Y-1140 / WM37) (Yeast).